The following is a 623-amino-acid chain: NADPH-dependent diflavin oxidoreductase 1 (623 aa).

Positions 7–168 (IVILYGSETG…VYFEYEKKVL (162 aa)) constitute a Flavodoxin-like domain. FMN contacts are provided by residues 13–18 (SETGNA), 60–63 (STTG), 106–115 (LGDSSYPKFN), and D142. The region spanning 224–491 (ESLKVGRVNI…VGPGVGLAPL (268 aa)) is the FAD-binding FR-type domain. FAD-binding positions include R383, 413–416 (RYYS), and 445–448 (GICT). 538 to 539 (SR) is a binding site for NADP(+). W623 lines the FAD pocket.

The protein belongs to the NADPH-dependent diflavin oxidoreductase NDOR1 family. In the N-terminal section; belongs to the flavodoxin family. It in the C-terminal section; belongs to the flavoprotein pyridine nucleotide cytochrome reductase family. As to quaternary structure, interacts with DRE2; as part of the cytosolic iron-sulfur (Fe-S) protein assembly (CIA) machinery. FAD serves as cofactor. The cofactor is FMN.

It is found in the cytoplasm. Its subcellular location is the mitochondrion. It carries out the reaction 2 oxidized [2Fe-2S]-[protein] + NADPH = 2 reduced [2Fe-2S]-[protein] + NADP(+) + H(+). In terms of biological role, NADPH-dependent reductase which is a central component of the cytosolic iron-sulfur (Fe-S) protein assembly (CIA) machinery. Transfers electrons from NADPH via its FAD and FMN prosthetic groups to the [2Fe-2S] cluster of DRE2, another key component of the CIA machinery. In turn, this reduced cluster provides electrons for assembly of cytosolic iron-sulfur cluster proteins. Positively controls H(2)O(2)-induced cell death. The sequence is that of NADPH-dependent diflavin oxidoreductase 1 from Saccharomyces cerevisiae (strain ATCC 204508 / S288c) (Baker's yeast).